The sequence spans 460 residues: Proton extrusion protein PxcA (460 aa).

A disordered region spans residues 84–194 (RLPDPEQNGS…KTNLDNSNAP (111 aa)). Residues 114 to 136 (NDGKDAENGRQSRDPSILEKLEF) are compositionally biased toward basic and acidic residues. Polar residues predominate over residues 167-194 (LTSSQPEPSDPSIKTNLAKTNLDNSNAP). 4 consecutive transmembrane segments (helical) span residues 242–262 (FLLL…HFLF), 337–357 (GLKN…LILI), 373–393 (IYGL…DVFV), and 420–440 (FIYG…KYWI).

This sequence belongs to the CemA family.

The protein resides in the cell inner membrane. Required for H(+) efflux immediately after light irradiation to form a rapid H(+) concentration gradient across the thylakoid membranes. Together with PxcL, contributes to transient H(+) uptake following dark to light transition. The sequence is that of Proton extrusion protein PxcA from Synechococcus sp. (strain JA-3-3Ab) (Cyanobacteria bacterium Yellowstone A-Prime).